A 553-amino-acid chain; its full sequence is Cytochrome P450 monooxygenase alnD (553 aa).

A helical transmembrane segment spans residues 351-371 (LVGAGFVTSSAFLSWLIYSLV). Position 493 (Cys-493) interacts with heme. N-linked (GlcNAc...) asparagine glycosylation is present at Asn-518.

The protein belongs to the cytochrome P450 family. It depends on heme as a cofactor.

It is found in the membrane. The protein operates within polyketide biosynthesis. Its function is as follows. Cytochrome P450 monooxygenase; part of the gene cluster that mediates the biosynthesis of asperlin, a polyketide showing anti-inflammatory, antitumor and antibiotic activities. The first step of the asperlin biosynthesis is the production of the intermediate 2,4,6-octatrienoic acid by the highly redusing polyketide synthase alnA with cleavage of the PKS product by the esterase alnB. 2,4,6-octatrienoic acid is further converted to asperlin via several steps involving the remaining enzymes from the cluster. This is Cytochrome P450 monooxygenase alnD from Emericella nidulans (strain FGSC A4 / ATCC 38163 / CBS 112.46 / NRRL 194 / M139) (Aspergillus nidulans).